Reading from the N-terminus, the 183-residue chain is Endoribonuclease YbeY (183 aa).

His140, His144, and His150 together coordinate Zn(2+).

It belongs to the endoribonuclease YbeY family. It depends on Zn(2+) as a cofactor.

It localises to the cytoplasm. Functionally, single strand-specific metallo-endoribonuclease involved in late-stage 70S ribosome quality control and in maturation of the 3' terminus of the 16S rRNA. This chain is Endoribonuclease YbeY, found in Bradyrhizobium diazoefficiens (strain JCM 10833 / BCRC 13528 / IAM 13628 / NBRC 14792 / USDA 110).